We begin with the raw amino-acid sequence, 515 residues long: 2,3-bisphosphoglycerate-independent phosphoglycerate mutase (515 aa).

Residues Asp14 and Ser64 each coordinate Mn(2+). Residue Ser64 is the Phosphoserine intermediate of the active site. Residues His125, Arg155–Asp156, Arg187, Arg193, Arg263–Arg266, and Lys337 contribute to the substrate site. Mn(2+)-binding residues include Asp404, His408, Asp445, His446, and His464.

The protein belongs to the BPG-independent phosphoglycerate mutase family. In terms of assembly, monomer. It depends on Mn(2+) as a cofactor.

The catalysed reaction is (2R)-2-phosphoglycerate = (2R)-3-phosphoglycerate. It functions in the pathway carbohydrate degradation; glycolysis; pyruvate from D-glyceraldehyde 3-phosphate: step 3/5. In terms of biological role, catalyzes the interconversion of 2-phosphoglycerate and 3-phosphoglycerate. The sequence is that of 2,3-bisphosphoglycerate-independent phosphoglycerate mutase from Cronobacter sakazakii (strain ATCC BAA-894) (Enterobacter sakazakii).